Consider the following 206-residue polypeptide: Large ribosomal subunit protein uL4 (206 aa).

A compositionally biased stretch (polar residues) spans 42 to 54 (RRQQGTHQSQGRS). Residues 42–93 (RRQQGTHQSQGRSDVSRTGAKMFKQKGTGRARHSSARAPQFRGGGKAHGPVV) form a disordered region. Over residues 64-76 (FKQKGTGRARHSS) the composition is skewed to basic residues.

This sequence belongs to the universal ribosomal protein uL4 family. As to quaternary structure, part of the 50S ribosomal subunit.

Its function is as follows. One of the primary rRNA binding proteins, this protein initially binds near the 5'-end of the 23S rRNA. It is important during the early stages of 50S assembly. It makes multiple contacts with different domains of the 23S rRNA in the assembled 50S subunit and ribosome. In terms of biological role, forms part of the polypeptide exit tunnel. The polypeptide is Large ribosomal subunit protein uL4 (Bartonella henselae (strain ATCC 49882 / DSM 28221 / CCUG 30454 / Houston 1) (Rochalimaea henselae)).